The following is a 304-amino-acid chain: Uricase (304 aa).

An N-acetylalanine modification is found at A2. An N6-acetyllysine; alternate mark is found at K10 and K23. N6-succinyllysine; alternate occurs at positions 10 and 23. Catalysis depends on K23, which acts as the Charge relay system. N6-acetyllysine occurs at positions 27 and 36. S39 and S63 each carry phosphoserine. The Charge relay system role is filled by T68. 2 residues coordinate urate: T68 and D69. N6-acetyllysine is present on residues K118, K122, and K164. F170 provides a ligand contact to urate. Residues K175 and K185 each carry the N6-acetyllysine modification. R187 serves as a coordination point for urate. 2 positions are modified to N6-acetyllysine; alternate: K221 and K228. An N6-succinyllysine; alternate mark is found at K221 and K228. S232 is subject to Phosphoserine. The urate site is built by V235, Q236, and N262. The active-site Charge relay system is H264. N6-acetyllysine is present on K278. Y289 carries the phosphotyrosine modification. Positions 302–304 (SRL) match the Microbody targeting signal motif.

It belongs to the uricase family. Homotetramer.

It is found in the peroxisome. It carries out the reaction urate + O2 + H2O = 5-hydroxyisourate + H2O2. It participates in purine metabolism; urate degradation; (S)-allantoin from urate: step 1/3. Catalyzes the oxidation of uric acid to 5-hydroxyisourate, which is further processed to form (S)-allantoin. The protein is Uricase (UOX) of Bos taurus (Bovine).